The sequence spans 831 residues: MTLSRRDFIKQTAVAATASVAGVTLPAGAANFVTDSEVTKLKWSKAPCRFCGTGCGVTVAVRDNKVVATNGDPQAEVNKGLNCVKGYFLSKIMYGQDRLTKPLLRMKNGQYDKNGEFAPVTWERAFDEMERQFKRVLKEKGPTAVGMFGSGQWTVWEGYAASKLYKAGFRSNNIDPNARHCMASAVQGFMRTFGMDEPMGCYDDFEAADAFVLWGSNMAEMHPILWTRITDRRLSHPKTRVAVLSTFTHRSFDLADIPVIFKPQTDLAMMNYIAHYIIKNNKVNKDFVNKHTVFKEGVTNIGYGLRPDHPLQKAAKNAADPGASRPITFDDFARFVAKYDADTVSKLSGVPKDKLDQLAELYADTNIKVMSLWTMGFNQHTRGSWANNMVYNLHLLTGKIATPGNSPFSLTGQPSACGTAREVGTFSHRLPADMVVTNPKHREEAERIWKLPPGTIPDKPGYHAVLQNRMLKDGKLNAYWVQVNNNMQAAANLMEEGLPGYRNPANFIVVSDAYPTVTALAADLILPSAMWVEKEGAYGNAERRTQFWHQLVDAPGEARSDLWQLMEFSKRFKVEDVWPADLIAKKPEYRGKTLFDVLYRNGQVDKFPLKEVNAEYHNAEAKAFGFYVQKGLFEEYATFGRGHGHDLAPFDAYHEARGLRWPVVNGKETRWRYREGSDPYVKAGTGYQFYGNPDGKAVIFALPYEPPAESPDKEYPYWLVTGRVLEHWHSGSMTRRVPELYRAFPNAVVFMHPEDAKAMGLRRGVEVEVVSRRGSMRSRLETRGRDAPPRGLVFVPWFDASQLINKVTLDATCPISLQTDFKKCAVKIVKV.

A signal peptide (tat-type signal) is located at residues 1–29 (MTLSRRDFIKQTAVAATASVAGVTLPAGA). Residues 41 to 97 (LKWSKAPCRFCGTGCGVTVAVRDNKVVATNGDPQAEVNKGLNCVKGYFLSKIMYGQD) form the 4Fe-4S Mo/W bis-MGD-type domain. [4Fe-4S] cluster contacts are provided by Cys48, Cys51, Cys55, and Cys83. Mo-bis(molybdopterin guanine dinucleotide) is bound by residues Lys85, Gln152, Asn177, Cys181, 214–221 (WGSNMAEM), 245–249 (STFTH), 264–266 (QTD), Met375, Gln379, Asn485, 511–512 (SD), Lys534, Asp561, and 721–730 (TGRVLEHWHS). Trp797 lines the substrate pocket. Mo-bis(molybdopterin guanine dinucleotide) contacts are provided by Asn805 and Lys822.

This sequence belongs to the prokaryotic molybdopterin-containing oxidoreductase family. NasA/NapA/NarB subfamily. In terms of assembly, component of the periplasmic nitrate reductase NapAB complex composed of NapA and NapB. The cofactor is [4Fe-4S] cluster. Mo-bis(molybdopterin guanine dinucleotide) is required as a cofactor. In terms of processing, predicted to be exported by the Tat system. The position of the signal peptide cleavage has not been experimentally proven.

Its subcellular location is the periplasm. It catalyses the reaction 2 Fe(II)-[cytochrome] + nitrate + 2 H(+) = 2 Fe(III)-[cytochrome] + nitrite + H2O. Catalytic subunit of the periplasmic nitrate reductase complex NapAB. Receives electrons from NapB and catalyzes the reduction of nitrate to nitrite. This Cupriavidus taiwanensis (strain DSM 17343 / BCRC 17206 / CCUG 44338 / CIP 107171 / LMG 19424 / R1) (Ralstonia taiwanensis (strain LMG 19424)) protein is Periplasmic nitrate reductase.